Reading from the N-terminus, the 841-residue chain is Homeobox-leucine zipper protein ATHB-9 (841 aa).

The segment covering 1–18 (MMAHHSMDDRDSPDKGFD) has biased composition (basic and acidic residues). Residues 1–21 (MMAHHSMDDRDSPDKGFDSGK) form a disordered region. A DNA-binding region (homeobox) is located at residues 18 to 81 (DSGKYVRYTP…NRRCREKQRK (64 aa)). Residues 85 to 118 (RLQTVNRKLSAMNKLLMEENDRLQKQVSNLVYEN) adopt a coiled-coil conformation. 2 disordered regions span residues 140 to 162 (VVVS…RDVN) and 602 to 630 (DQKT…TKTD). Residues 145–155 (QQRQQQNPTHQ) are compositionally biased toward low complexity. The region spanning 160 to 388 (DVNNPANLLS…IAQETSGEVQ (229 aa)) is the START domain. Polar residues predominate over residues 603–614 (QKTNPNDHQSAS).

Belongs to the HD-ZIP homeobox family. Class III subfamily. In terms of assembly, binds DNA as homodimer. Interacts with ESR1 and ESR2. Interacts with ZPR3.

It is found in the nucleus. Probable transcription factor involved in the determination of adaxial-abaxial polarity in ovule primordium. Specifies adaxial leaf fates. Binds to the DNA sequence 5'-GTAAT[GC]ATTAC-3'. In Arabidopsis thaliana (Mouse-ear cress), this protein is Homeobox-leucine zipper protein ATHB-9 (ATHB-9).